We begin with the raw amino-acid sequence, 230 residues long: Octanoyltransferase (230 aa).

In terms of domain architecture, BPL/LPL catalytic spans 38 to 215 (AGGADTLLLL…AVCAALDGVL (178 aa)). Residues 76-83 (RGGKITWH), 145-147 (AIG), and 158-160 (GFA) each bind substrate. Cysteine 176 serves as the catalytic Acyl-thioester intermediate.

Belongs to the LipB family.

The protein localises to the cytoplasm. It catalyses the reaction octanoyl-[ACP] + L-lysyl-[protein] = N(6)-octanoyl-L-lysyl-[protein] + holo-[ACP] + H(+). It functions in the pathway protein modification; protein lipoylation via endogenous pathway; protein N(6)-(lipoyl)lysine from octanoyl-[acyl-carrier-protein]: step 1/2. Catalyzes the transfer of endogenously produced octanoic acid from octanoyl-acyl-carrier-protein onto the lipoyl domains of lipoate-dependent enzymes. Lipoyl-ACP can also act as a substrate although octanoyl-ACP is likely to be the physiological substrate. The polypeptide is Octanoyltransferase (Mycobacterium bovis (strain BCG / Tokyo 172 / ATCC 35737 / TMC 1019)).